We begin with the raw amino-acid sequence, 972 residues long: Aminopeptidase Ey (972 aa).

Residues 2–10 are Cytoplasmic-facing; it reads AAGFFISKS. The helical; Signal-anchor for type II membrane protein transmembrane segment at 11–31 threads the bilayer; sequence VGIVGIVLALGAVATIIALSV. Residues 32 to 972 lie on the Extracellular side of the membrane; it reads VYAQEKNKSS…AWFRAETASS (941 aa). Residues 33–72 form a cytosolic Ser/Thr-rich junction region; sequence YAQEKNKSSGGSGGSDTTSTTTASTTTTSTTTASTTAAPN. A disordered region spans residues 37–77; the sequence is KNKSSGGSGGSDTTSTTTASTTTTSTTTASTTAAPNNPWNR. N-linked (GlcNAc...) asparagine glycosylation is present at N38. Over residues 47-70 the composition is skewed to low complexity; it reads SDTTSTTTASTTTTSTTTASTTAA. Residues 73 to 967 form a metalloprotease region; the sequence is NPWNRWRLPT…KEVVHAWFRA (895 aa). 6 N-linked (GlcNAc...) asparagine glycosylation sites follow: N110, N132, N147, N206, N269, and N296. 355 to 359 contacts substrate; it reads GAMEN. Position 391 (H391) interacts with Zn(2+). E392 (proton acceptor) is an active-site residue. 2 residues coordinate Zn(2+): H395 and E414. N-linked (GlcNAc...) asparagine glycosylation is found at N513, N574, N584, N628, N684, and N742. C764 and C771 form a disulfide bridge. N-linked (GlcNAc...) asparagine glycosylation occurs at N785. C801 and C837 are oxidised to a cystine.

The protein belongs to the peptidase M1 family. As to quaternary structure, homodimer. Zn(2+) serves as cofactor. As to expression, detected in the plasma and granule fractions of egg yolk (at protein level).

Its subcellular location is the cell membrane. It catalyses the reaction Differs from other aminopeptidases in broad specificity for amino acids in the P1 position and the ability to hydrolyze peptides of four or five residues that contain Pro in the P1' position.. Its function is as follows. Broad specificity aminopeptidase. Degrades a variety of peptides possessing various N-terminal amino acids including hydrophobic, basic and acidic amino acids. Preferentially hydrolyzes small peptides consisting of 4 or 5 amino acids. Hydrolyzes the N-terminal Xaa-Pro bonds in the chicken brain peptide Leu-Pro-Leu-Arg-PheNH2, the substance P fragment Arg-Pro-Lys-Pro and the bradykinin fragment Arg-Pro-Pro-Gly-Phe. Hydrolyzes the N-formylated peptides fMet-Leu-Phe, fMet-Ala-Gly-Ser-Glu and fMet-Nle-Leu-Phe-Nle-Tyr-Lys, but does not hydrolyze peptides with acetylation or pyroglutamic acid at N-terminus. Does not hydrolyze large peptides such as complete substance P, bradykinin or schistoFLRFamide. The polypeptide is Aminopeptidase Ey (ANPEP) (Gallus gallus (Chicken)).